Reading from the N-terminus, the 544-residue chain is Tyrosine-protein kinase fynb (544 aa).

G2 is lipidated: N-myristoyl glycine. 2 S-palmitoyl cysteine lipidation sites follow: C3 and C6. Residues 89–150 (TGVTLFVALY…PSNYVAPVDS (62 aa)) form the SH3 domain. The SH2 domain occupies 156–253 (WYFGKLGRKD…GLCCRLVVPC (98 aa)). The 254-residue stretch at 278 to 531 (LQLIKRLGNG…YLQAFLEDYF (254 aa)) folds into the Protein kinase domain. Residues 284–292 (LGNGQFGEV) and K306 contribute to the ATP site. D397 (proton acceptor) is an active-site residue. Y427 is modified (phosphotyrosine; by autocatalysis). Y538 is modified (phosphotyrosine).

Belongs to the protein kinase superfamily. Tyr protein kinase family. SRC subfamily. Mn(2+) is required as a cofactor.

Its subcellular location is the cytoplasm. It catalyses the reaction L-tyrosyl-[protein] + ATP = O-phospho-L-tyrosyl-[protein] + ADP + H(+). With respect to regulation, inhibited by phosphorylation of Tyr-538 by leukocyte common antigen and activated by dephosphorylation of this site. In terms of biological role, tyrosine-protein kinase implicated in the control of cell growth. Plays a role in the regulation of intracellular calcium levels. Required in brain development and mature brain function with important roles in the regulation of axon growth, axon guidance, and neurite extension. Role in CNTN1-mediated signaling. This Danio rerio (Zebrafish) protein is Tyrosine-protein kinase fynb (fynb).